Consider the following 209-residue polypeptide: Glutathione S-transferase 1-1 (209 aa).

In terms of domain architecture, GST N-terminal spans 1-81 (MADFYYLPGS…YLVEKYGKTD (81 aa)). Glutathione is bound by residues Ser-10, 51-53 (HTI), and 65-67 (ESR). The 123-residue stretch at 87 to 209 (CPKKRAVINQ…GCLEFKKYFE (123 aa)) folds into the GST C-terminal domain.

It belongs to the GST superfamily. Theta family. As to quaternary structure, homodimer.

The enzyme catalyses RX + glutathione = an S-substituted glutathione + a halide anion + H(+). The catalysed reaction is 1,1,1-trichloro-2,2-bis(4-chlorophenyl)ethane = 1,1-dichloro-2,2-bis(4-chlorophenyl)ethylene + chloride + H(+). Its function is as follows. Conjugation of reduced glutathione to a wide number of exogenous and endogenous hydrophobic electrophiles. Has DDT dehydrochlorinase activity. In Drosophila simulans (Fruit fly), this protein is Glutathione S-transferase 1-1 (GstD1).